The following is a 270-amino-acid chain: Phospholysine phosphohistidine inorganic pyrophosphate phosphatase (270 aa).

Mg(2+) contacts are provided by Asp17 and Ser19. Residues 17–19 (DIS), 54–55 (TN), and Lys189 contribute to the substrate site. Asp214 is a binding site for Mg(2+).

This sequence belongs to the HAD-like hydrolase superfamily. Homodimer. It depends on Mg(2+) as a cofactor.

It is found in the cytoplasm. The protein localises to the nucleus. The catalysed reaction is diphosphate + H2O = 2 phosphate + H(+). Phosphatase that hydrolyzes imidodiphosphate, 3-phosphohistidine and 6-phospholysine. Has broad substrate specificity and can also hydrolyze inorganic diphosphate, but with lower efficiency. This is Phospholysine phosphohistidine inorganic pyrophosphate phosphatase (Lhpp) from Rattus norvegicus (Rat).